Here is a 422-residue protein sequence, read N- to C-terminus: Probable sucrose-phosphatase 2 (422 aa).

It belongs to the sucrose phosphatase family. As to quaternary structure, homodimer. Requires Mg(2+) as cofactor.

The enzyme catalyses sucrose 6(F)-phosphate + H2O = sucrose + phosphate. The protein operates within glycan biosynthesis; sucrose biosynthesis; sucrose from D-fructose 6-phosphate and UDP-alpha-D-glucose: step 2/2. Functionally, catalyzes the final step of sucrose synthesis. The polypeptide is Probable sucrose-phosphatase 2 (SPP2) (Arabidopsis thaliana (Mouse-ear cress)).